Here is a 212-residue protein sequence, read N- to C-terminus: Large ribosomal subunit protein uL3 (212 aa).

It belongs to the universal ribosomal protein uL3 family. In terms of assembly, part of the 50S ribosomal subunit. Forms a cluster with proteins L14 and L19.

Functionally, one of the primary rRNA binding proteins, it binds directly near the 3'-end of the 23S rRNA, where it nucleates assembly of the 50S subunit. This chain is Large ribosomal subunit protein uL3, found in Ruminiclostridium cellulolyticum (strain ATCC 35319 / DSM 5812 / JCM 6584 / H10) (Clostridium cellulolyticum).